Consider the following 471-residue polypeptide: DENN domain-containing protein 2D (471 aa).

The uDENN domain occupies 55 to 204; that stretch reads EYLLVVSLKK…AFPAPGKTVT (150 aa). Residues 226-359 form the cDENN domain; sequence HLEHVDFSSL…LQDDILDSLG (134 aa). One can recognise a dDENN domain in the interval 361–445; the sequence is GINELKTAEQ…QEAEKSKNPP (85 aa).

In terms of tissue distribution, in bronchial mucosa, mainly expressed in ciliated and basal epithelial cells and weakly in alveolar cells (at protein level). Tends to be down-regulated in lung cancers, immortalized bronchial epithelial cell lines and precancerous lesions.

Its subcellular location is the cytoplasm. Functionally, guanine nucleotide exchange factor (GEF) which may activate RAB9A and RAB9B. Promotes the exchange of GDP to GTP, converting inactive GDP-bound Rab proteins into their active GTP-bound form. In Homo sapiens (Human), this protein is DENN domain-containing protein 2D (DENND2D).